We begin with the raw amino-acid sequence, 239 residues long: Cell number regulator 6 (239 aa).

The segment covering 1 to 10 has biased composition (polar residues); sequence MAEDATSSHP. The segment at 1 to 33 is disordered; that stretch reads MAEDATSSHPSRYVKLTKDQDAPAEDIRPGELN. Basic and acidic residues predominate over residues 16-29; sequence LTKDQDAPAEDIRP. 2 consecutive transmembrane segments (helical) span residues 107-127 and 136-156; these read CVCH…TAIF and FLIG…TGIF.

Belongs to the cornifelin family. In terms of tissue distribution, expressed in roots, leaves, stalks, apical meristems, immature ears, endosperm, pericarp and tassel spikelets.

The protein resides in the membrane. The sequence is that of Cell number regulator 6 (CNR6) from Zea mays (Maize).